Here is a 1077-residue protein sequence, read N- to C-terminus: ATP-dependent helicase/deoxyribonuclease subunit B (1077 aa).

Belongs to the helicase family. AddB/RexB type 2 subfamily. As to quaternary structure, heterodimer of AddA and RexB. Requires Mg(2+) as cofactor.

Its function is as follows. The heterodimer acts as both an ATP-dependent DNA helicase and an ATP-dependent, dual-direction single-stranded exonuclease. Recognizes the chi site generating a DNA molecule suitable for the initiation of homologous recombination. This subunit has 5' -&gt; 3' nuclease activity but not helicase activity. In Streptococcus agalactiae serotype Ia (strain ATCC 27591 / A909 / CDC SS700), this protein is ATP-dependent helicase/deoxyribonuclease subunit B.